A 443-amino-acid chain; its full sequence is Tol-Pal system protein TolB (443 aa).

Positions 1–33 (MKIGIINTKIRTVFSAFACMIAASLVCTMPARA) are cleaved as a signal peptide.

This sequence belongs to the TolB family. The Tol-Pal system is composed of five core proteins: the inner membrane proteins TolA, TolQ and TolR, the periplasmic protein TolB and the outer membrane protein Pal. They form a network linking the inner and outer membranes and the peptidoglycan layer.

The protein localises to the periplasm. Its function is as follows. Part of the Tol-Pal system, which plays a role in outer membrane invagination during cell division and is important for maintaining outer membrane integrity. The sequence is that of Tol-Pal system protein TolB from Brucella abortus (strain S19).